A 33-amino-acid polypeptide reads, in one-letter code: Gastrin (33 aa).

The disordered stretch occupies residues 1-21; sequence ELEPQGPPHLGTDLSKKQGPW. Gln18 is subject to Pyrrolidone carboxylic acid. Position 28 is a sulfotyrosine (Tyr28). Phe33 carries the post-translational modification Phenylalanine amide.

The protein belongs to the gastrin/cholecystokinin family.

Its subcellular location is the secreted. Its function is as follows. Gastrin stimulates the stomach mucosa to produce and secrete hydrochloric acid and the pancreas to secrete its digestive enzymes. It also stimulates smooth muscle contraction and increases blood circulation and water secretion in the stomach and intestine. This is Gastrin (GAST) from Chinchilla chinchilla (Short-tailed chinchilla).